The chain runs to 339 residues: Diacylglycerol acyltransferase/mycolyltransferase Ag85A (339 aa).

The N-terminal stretch at 1–43 is a signal peptide; the sequence is MKLVDRFRGAVTGMPRRLMVGAVGAALLSGLVGFVGGSATASA. 85–86 provides a ligand contact to substrate; sequence MR. The tract at residues 101-111 is fibronectin-binding; sequence FEWYNQSGISV. Cysteine 130 and cysteine 135 are oxidised to a cystine. Residues serine 169 and aspartate 197 each contribute to the substrate site. The Nucleophile role is filled by serine 169. Glutamate 272 is a catalytic residue. Residues 274–277, lysine 281, and 304–306 each bind substrate; these read FVRT and HDW. The active site involves histidine 304.

The protein belongs to the mycobacterial A85 antigen family. As to quaternary structure, homodimer.

The protein localises to the secreted. It localises to the cell wall. It is found in the cytoplasm. The catalysed reaction is an acyl-CoA + a 1,2-diacyl-sn-glycerol = a triacyl-sn-glycerol + CoA. The enzyme catalyses 2 alpha,alpha'-trehalose 6-mycolate = alpha,alpha'-trehalose 6,6'-bismycolate + alpha,alpha-trehalose. Functionally, the antigen 85 proteins (FbpA, FbpB, FbpC) are responsible for the high affinity of mycobacteria for fibronectin, a large adhesive glycoprotein, which facilitates the attachment of M.tuberculosis to murine alveolar macrophages (AMs). They also help to maintain the integrity of the cell wall by catalyzing the transfer of mycolic acids to cell wall arabinogalactan, and through the synthesis of alpha,alpha-trehalose dimycolate (TDM, cord factor). They catalyze the transfer of a mycoloyl residue from one molecule of alpha,alpha-trehalose monomycolate (TMM) to another TMM, leading to the formation of TDM. FbpA mediates triacylglycerol (TAG) formation with long-chain acyl-CoA as the acyl donor and 1,2-dipalmitoyl-sn-glycerol (1,2-dipalmitin) as the acyl acceptor. It has a preference for C26:0-CoA over C18:1-CoA. The sequence is that of Diacylglycerol acyltransferase/mycolyltransferase Ag85A (fbpA) from Mycobacterium gordonae.